The following is a 504-amino-acid chain: ATP synthase subunit alpha (504 aa).

Residue 170-177 (GDRQTGKT) coordinates ATP.

The protein belongs to the ATPase alpha/beta chains family. F-type ATPases have 2 components, CF(1) - the catalytic core - and CF(0) - the membrane proton channel. CF(1) has five subunits: alpha(3), beta(3), gamma(1), delta(1), epsilon(1). CF(0) has three main subunits: a(1), b(2) and c(9-12). The alpha and beta chains form an alternating ring which encloses part of the gamma chain. CF(1) is attached to CF(0) by a central stalk formed by the gamma and epsilon chains, while a peripheral stalk is formed by the delta and b chains.

It is found in the cell membrane. It catalyses the reaction ATP + H2O + 4 H(+)(in) = ADP + phosphate + 5 H(+)(out). In terms of biological role, produces ATP from ADP in the presence of a proton gradient across the membrane. The alpha chain is a regulatory subunit. The protein is ATP synthase subunit alpha of Shouchella clausii (strain KSM-K16) (Alkalihalobacillus clausii).